A 128-amino-acid chain; its full sequence is Calcitonin gene-related peptide 1 (128 aa).

The N-terminal stretch at 1–25 (MGFLKFSPFLVVSILLLYQACGLQA) is a signal peptide. A propeptide spanning residues 26–80 (VPLRSTLESSPGMAATLSEEEARLLLAALVQNYMQMKVRELEQEQEAEGSSVTAQ) is cleaved from the precursor. A disulfide bridge connects residues Cys84 and Cys89. A Phenylalanine amide modification is found at Phe119. The propeptide occupies 125 to 128 (DLQA).

Belongs to the calcitonin family.

The protein localises to the secreted. CGRP1/CALCA is a peptide hormone that induces vasodilation mediated by the CALCRL-RAMP1 receptor complex. Dilates a variety of vessels including the coronary, cerebral and systemic vasculature. Its abundance in the CNS also points toward a neurotransmitter or neuromodulator role. It also elevates platelet cAMP. CGRP1 can also bind and activate CALCR-RAMP1 (AMYR1) receptor complex. The protein is Calcitonin gene-related peptide 1 of Rattus norvegicus (Rat).